The following is a 430-amino-acid chain: Leucoanthocyanidin dioxygenase (430 aa).

Residues 212-311 (LLLQMKINYY…RFSWAIFCEP (100 aa)) enclose the Fe2OG dioxygenase domain. 3 residues coordinate Fe cation: H236, D238, and H292. Basic and acidic residues-rich tracts occupy residues 376–407 (KKDNQDAVAENKDIKEDEQCGPAEHKDIKEDG) and 415–430 (KVFKENNQDVAAEESK). The interval 376 to 430 (KKDNQDAVAENKDIKEDEQCGPAEHKDIKEDGQGAAAENKVFKENNQDVAAEESK) is disordered.

It belongs to the iron/ascorbate-dependent oxidoreductase family. Fe cation serves as cofactor. L-ascorbate is required as a cofactor. As to expression, predominantly expressed in corollas and at lower levels in anthers.

It carries out the reaction a (2R,3S,4S)-leucoanthocyanidin + 2-oxoglutarate + O2 = a 4-H-anthocyanidin with a 3-hydroxy group + succinate + CO2 + 2 H2O. The protein operates within pigment biosynthesis; anthocyanin biosynthesis. Functionally, oxidation of leucoanthocyanidins into anthocyanidins. This Petunia hybrida (Petunia) protein is Leucoanthocyanidin dioxygenase (ANT17).